The following is a 337-amino-acid chain: Anthranilate phosphoribosyltransferase (337 aa).

5-phospho-alpha-D-ribose 1-diphosphate-binding positions include Gly-82, 85–86 (GD), Thr-90, 92–95 (NIST), 110–118 (KHGNRAMSS), and Thr-122. Gly-82 is a binding site for anthranilate. Residue Ser-94 participates in Mg(2+) binding. Asn-113 is a binding site for anthranilate. Arg-168 serves as a coordination point for anthranilate. Residues Asp-226 and Glu-227 each coordinate Mg(2+).

The protein belongs to the anthranilate phosphoribosyltransferase family. Homodimer. Requires Mg(2+) as cofactor.

The enzyme catalyses N-(5-phospho-beta-D-ribosyl)anthranilate + diphosphate = 5-phospho-alpha-D-ribose 1-diphosphate + anthranilate. Its pathway is amino-acid biosynthesis; L-tryptophan biosynthesis; L-tryptophan from chorismate: step 2/5. In terms of biological role, catalyzes the transfer of the phosphoribosyl group of 5-phosphorylribose-1-pyrophosphate (PRPP) to anthranilate to yield N-(5'-phosphoribosyl)-anthranilate (PRA). This is Anthranilate phosphoribosyltransferase from Phenylobacterium zucineum (strain HLK1).